The sequence spans 87 residues: Defensin-A (87 aa).

The signal sequence occupies residues 1–19 (MKFYLVLAFLTLCAVAVTA). The propeptide occupies 20 to 44 (LPAGDETRIDLETLEEDLRLVDGAQ). Intrachain disulfides connect cysteine 57/cysteine 78, cysteine 64/cysteine 83, and cysteine 68/cysteine 85.

In terms of tissue distribution, hemolymph and fat body.

It is found in the secreted. Functionally, antibacterial peptide mostly active against Gram-positive and Gram negative bacteria. The polypeptide is Defensin-A (Glossina morsitans morsitans (Savannah tsetse fly)).